The chain runs to 1335 residues: Probable serine/threonine-protein kinase ndrC (1335 aa).

Disordered regions lie at residues M1–S70, V85–S158, L276–N447, and T462–K603. Residues N8 to E17 are compositionally biased toward polar residues. Residues S27–S41 show a composition bias toward low complexity. A compositionally biased stretch (basic residues) spans R55–S70. The span at S89–S117 shows a compositional bias: low complexity. Polar residues predominate over residues T118 to M132. The segment covering N133–S153 has biased composition (low complexity). Residues L276 to Q288 are compositionally biased toward pro residues. 6 stretches are compositionally biased toward low complexity: residues S289–S331, N345–K368, S382–S396, P412–S424, P437–N447, and T462–S484. Over residues N485 to L497 the composition is skewed to polar residues. Positions S498–N507 are enriched in low complexity. Residues G508–E528 show a composition bias toward polar residues. The segment covering S540–G566 has biased composition (low complexity). Residues K567 to L581 show a composition bias toward basic and acidic residues. Over residues N586 to N602 the composition is skewed to low complexity. Positions N586 to K613 form a coiled coil. A Protein kinase domain is found at F718–F1019. ATP contacts are provided by residues I724–V732 and K747. D840 acts as the Proton acceptor in catalysis. One can recognise an AGC-kinase C-terminal domain in the interval K1020–M1106. Low complexity predominate over residues S1239–L1284. The segment at S1239 to I1313 is disordered. A compositionally biased stretch (basic and acidic residues) spans P1287–I1313. Residues K1289–I1325 are a coiled coil.

The protein belongs to the protein kinase superfamily. AGC Ser/Thr protein kinase family.

The catalysed reaction is L-seryl-[protein] + ATP = O-phospho-L-seryl-[protein] + ADP + H(+). The enzyme catalyses L-threonyl-[protein] + ATP = O-phospho-L-threonyl-[protein] + ADP + H(+). The chain is Probable serine/threonine-protein kinase ndrC (ndrC) from Dictyostelium discoideum (Social amoeba).